The chain runs to 911 residues: DNA replication licensing factor mcm4 (911 aa).

The tract at residues 1 to 132 is disordered; the sequence is MSSSQQSGRA…RPGVSTPSSL (132 aa). Serine 37, serine 38, and serine 41 each carry phosphoserine. Over residues 42-56 the composition is skewed to low complexity; the sequence is TRLTTPRTTARTPLA. Positions 63–84 are enriched in polar residues; it reads ESSSPGPNIPQSSRSHLLSQRN. Serine 92 is modified (phosphoserine). Residues 493–702 enclose the MCM domain; it reads IYDILSRSLA…LDRKLANHIV (210 aa). 545–552 serves as a coordination point for ATP; it reads GDPSTSKS. The Arginine finger motif lies at 677–680; the sequence is SRFD.

The protein belongs to the MCM family. In terms of assembly, component of the mcm2-7 complex. The complex forms a toroidal hexameric ring with the proposed subunit order mcm2-mcm6-mcm4-mcm7-mcm3-mcm5. The heterodimers of mcm4/mcm6 and mcm3/mcm5 interact with mcm2 and mcm7.

Its subcellular location is the nucleus. It catalyses the reaction ATP + H2O = ADP + phosphate + H(+). Acts as a component of the mcm2-7 complex (mcm complex) which is the putative replicative helicase essential for 'once per cell cycle' DNA replication initiation and elongation in eukaryotic cells. The active ATPase sites in the mcm2-7 ring are formed through the interaction surfaces of two neighboring subunits such that a critical structure of a conserved arginine finger motif is provided in trans relative to the ATP-binding site of the Walker A box of the adjacent subunit. The six ATPase active sites, however, are likely to contribute differentially to the complex helicase activity. Required for S phase execution. The sequence is that of DNA replication licensing factor mcm4 (mcm4) from Schizosaccharomyces pombe (strain 972 / ATCC 24843) (Fission yeast).